A 1133-amino-acid chain; its full sequence is Lon protease homolog, mitochondrial (1133 aa).

The transit peptide at 1 to 37 directs the protein to the mitochondrion; it reads MLRTRTTKTLSTVARTTRAIQYYRSIAKTAAVSQRRF. Residues 38–98 constitute a propeptide, removed in mature form; by autocatalysis; sequence ASTLTVRDVE…ATNSGKSILA (61 aa). 2 stretches are compositionally biased toward basic and acidic residues: residues 98–117 and 125–143; these read AKDD…VPDE and EPTR…EASK. Disordered stretches follow at residues 98–176 and 282–358; these read AKDD…KDVP and ELFP…LDDI. The span at 145 to 166 shows a compositional bias: low complexity; sequence SRSSASGGGQSSSSRSDSGDGS. Positions 182-480 constitute a Lon N-terminal domain; the sequence is MLALPIARRP…KSLLVLKKEL (299 aa). 2 stretches are compositionally biased toward basic and acidic residues: residues 282 to 301 and 325 to 340; these read ELFP…KDTD and KLED…SELQ. Positions 348-358 are enriched in acidic residues; it reads TEEESEELDDI. 632–639 serves as a coordination point for ATP; the sequence is GPPGVGKT. The dispensable for catalytic activity stretch occupies residues 839 to 892; it reads KKLSIEDSPTSSADSKPKESVSSEEKAENNAKSSSEKTKDNNSEKTSDDIEALK. The segment at 844–889 is disordered; sequence EDSPTSSADSKPKESVSSEEKAENNAKSSSEKTKDNNSEKTSDDIE. Over residues 853–889 the composition is skewed to basic and acidic residues; it reads SKPKESVSSEEKAENNAKSSSEKTKDNNSEKTSDDIE. Residues 923-1109 form the Lon proteolytic domain; it reads TTPPGVVMGL…NDIFQKLFKD (187 aa). Catalysis depends on residues Ser1015 and Lys1058.

Belongs to the peptidase S16 family. Homohexamer. Organized in a ring with a central cavity. The ATP-binding and proteolytic domains (AP-domain) form a hexameric chamber. Oligomerization is independent of its proteolytic activity and the autocatalytic maturation of its subunits.

The protein localises to the mitochondrion matrix. It carries out the reaction Hydrolysis of proteins in presence of ATP.. In terms of biological role, ATP-dependent serine protease that mediates the selective degradation of misfolded, unassembled or oxidatively damaged polypeptides as well as certain short-lived regulatory proteins in the mitochondrial matrix. May also have a chaperone function in the assembly of inner membrane protein complexes. Participates in the regulation of mitochondrial gene expression and in the maintenance of the integrity of the mitochondrial genome. Binds to mitochondrial DNA in a site-specific manner. Endogenous substrates include ABF2, ACO2, ILV1, ILV2, LSC1, LYS4, MGM101 and several oxidized proteins. The 2 nucleic acid-binding proteins ABF2 and MGM101 are protected from degradation by PIM1 when they are bound to DNA. This Saccharomyces cerevisiae (strain ATCC 204508 / S288c) (Baker's yeast) protein is Lon protease homolog, mitochondrial.